A 156-amino-acid polypeptide reads, in one-letter code: ATP synthase subunit b (156 aa).

A helical membrane pass occupies residues 7 to 27 (LIGQTVAFIIFVWFCMKFVWP).

It belongs to the ATPase B chain family. In terms of assembly, F-type ATPases have 2 components, F(1) - the catalytic core - and F(0) - the membrane proton channel. F(1) has five subunits: alpha(3), beta(3), gamma(1), delta(1), epsilon(1). F(0) has three main subunits: a(1), b(2) and c(10-14). The alpha and beta chains form an alternating ring which encloses part of the gamma chain. F(1) is attached to F(0) by a central stalk formed by the gamma and epsilon chains, while a peripheral stalk is formed by the delta and b chains.

The protein resides in the cell inner membrane. F(1)F(0) ATP synthase produces ATP from ADP in the presence of a proton or sodium gradient. F-type ATPases consist of two structural domains, F(1) containing the extramembraneous catalytic core and F(0) containing the membrane proton channel, linked together by a central stalk and a peripheral stalk. During catalysis, ATP synthesis in the catalytic domain of F(1) is coupled via a rotary mechanism of the central stalk subunits to proton translocation. Functionally, component of the F(0) channel, it forms part of the peripheral stalk, linking F(1) to F(0). This is ATP synthase subunit b from Shewanella baltica (strain OS155 / ATCC BAA-1091).